The following is a 587-amino-acid chain: Beta-(1--&gt;2)glucan export ATP-binding/permease protein NdvA (587 aa).

The region spanning 21–301 is the ABC transmembrane type-1 domain; sequence VSLVVIANIV…MRQFATQIFE (281 aa). Helical transmembrane passes span 23 to 43, 57 to 77, 126 to 146, 158 to 178, 248 to 268, and 272 to 292; these read LVVI…ILFG, PILF…VLVS, LFGL…ALAL, LSAV…VVMS, MAST…VQSG, and IGDV…LDLM. The 235-residue stretch at 335 to 569 folds into the ABC transporter domain; that stretch reads IEFRDVSFGF…NGRFAALLRA (235 aa). 368–375 is a binding site for ATP; it reads GPTGAGKT.

It belongs to the ABC transporter superfamily. Beta-(1--&gt;2)glucan exporter (TC 3.A.1.108.1) family. As to quaternary structure, homodimer.

It is found in the cell inner membrane. It catalyses the reaction [(1-&gt;2)-beta-D-glucosyl](n)(in) + ATP + H2O = [(1-&gt;2)-beta-D-glucosyl](n)(out) + ADP + phosphate + H(+). Its function is as follows. Involved in beta-(1--&gt;2)glucan export. Transmembrane domains (TMD) form a pore in the inner membrane and the ATP-binding domain (NBD) is responsible for energy generation. In Rhizobium etli (strain ATCC 51251 / DSM 11541 / JCM 21823 / NBRC 15573 / CFN 42), this protein is Beta-(1--&gt;2)glucan export ATP-binding/permease protein NdvA.